We begin with the raw amino-acid sequence, 1505 residues long: Synaptonemal complex protein 2 (1505 aa).

A disordered region spans residues 439–483 (EKSNLQKKLTNPLEPDNSSSQRDRKNSQDEITTPSRKKMSEASMI). S457 and S465 each carry phosphoserine. T471 is subject to Phosphothreonine. A Phosphoserine modification is found at S494. At T503 the chain carries Phosphothreonine. S507, S516, S525, and S534 each carry phosphoserine. The segment at 536-571 (KSRQSDGRNRGNNRANHNKTATVQNKGHEHHESPDQ) is disordered. T613 and T638 each carry phosphothreonine. S651, S655, and S746 each carry phosphoserine. The tract at residues 745 to 764 (KSPSRKSMRSHTKSRKELMS) is disordered. Residues 748-758 (SRKSMRSHTKS) are compositionally biased toward basic residues. S920 bears the Phosphoserine mark. Phosphothreonine is present on T922. Disordered stretches follow at residues 949 to 974 (YSRN…QPRS) and 1035 to 1080 (KEET…NGRE). Residues 953–962 (KNTKKCKSIK) show a composition bias toward basic residues. 8 positions are modified to phosphoserine: S1121, S1123, S1130, S1146, S1150, S1162, S1165, and S1170. T1174 carries the phosphothreonine modification. The residue at position 1188 (S1188) is a Phosphoserine. The segment at 1199–1239 (NSYSDVSSNSSEKLYMEPESPDSCENHVQSKREENHAASPF) is disordered. The segment covering 1200-1209 (SYSDVSSNSS) has biased composition (low complexity). A phosphoserine mark is found at S1218 and S1221. The segment covering 1222–1234 (CENHVQSKREENH) has biased composition (basic and acidic residues). Phosphoserine occurs at positions 1237, 1280, and 1283. T1318 is modified (phosphothreonine). A coiled-coil region spans residues 1384-1435 (ENIDKFQVTLLDELEKVEKDSQTLRDLEKEFVDIEEKIVHKMRAFHQSERER).

The protein belongs to the SYCP2 family. As to quaternary structure, component of the lateral elements of synaptonemal complexes. Interacts with TEX11. Heterodimer with SYCP3. Interacts with SYCP3, SMC1A and SMC3. Post-translationally, phosphorylated. Detected in spermatocytes and testis (at protein level). Spermatocytes and oocytes. Meiotic prophase cells.

It is found in the nucleus. It localises to the chromosome. Major component of the axial/lateral elements of synaptonemal complexes (SCS) during meiotic prophase. Plays a role in the assembly of synaptonemal complexes. Required for normal meiotic chromosome synapsis during oocyte and spermatocyte development and for normal male and female fertility. Required for insertion of SYCP3 into synaptonemal complexes. May be involved in the organization of chromatin by temporarily binding to DNA scaffold attachment regions. Requires SYCP3, but not SYCP1, in order to be incorporated into the axial/lateral elements. The chain is Synaptonemal complex protein 2 (Sycp2) from Rattus norvegicus (Rat).